Here is a 339-residue protein sequence, read N- to C-terminus: Malate/(S)-sulfolactate dehydrogenase (339 aa).

The protein belongs to the LDH2/MDH2 oxidoreductase family. As to quaternary structure, homodimer.

It localises to the cytoplasm. It catalyses the reaction (S)-malate + NAD(+) = oxaloacetate + NADH + H(+). It carries out the reaction (S)-malate + NADP(+) = oxaloacetate + NADPH + H(+). The catalysed reaction is (2S)-3-sulfolactate + NAD(+) = 3-sulfopyruvate + NADH + H(+). Acts on oxaloacetate, sulfopyruvate but not on pyruvate. Has a higher selectivity for the coenzyme NADH than for NADPH. The protein is Malate/(S)-sulfolactate dehydrogenase (mdh) of Methanothermus fervidus (strain ATCC 43054 / DSM 2088 / JCM 10308 / V24 S).